Reading from the N-terminus, the 264-residue chain is Thymidylate synthase (264 aa).

A dUMP-binding site is contributed by Arg21. (6R)-5,10-methylene-5,6,7,8-tetrahydrofolate is bound at residue His51. Position 126-127 (126-127 (RR)) interacts with dUMP. Residue Cys146 is the Nucleophile of the active site. Residues 166 to 169 (RSAD), Asn177, and 207 to 209 (HLY) each bind dUMP. Asp169 provides a ligand contact to (6R)-5,10-methylene-5,6,7,8-tetrahydrofolate. Ala263 is a (6R)-5,10-methylene-5,6,7,8-tetrahydrofolate binding site.

It belongs to the thymidylate synthase family. Bacterial-type ThyA subfamily. As to quaternary structure, homodimer.

Its subcellular location is the cytoplasm. It catalyses the reaction dUMP + (6R)-5,10-methylene-5,6,7,8-tetrahydrofolate = 7,8-dihydrofolate + dTMP. The protein operates within pyrimidine metabolism; dTTP biosynthesis. Its function is as follows. Catalyzes the reductive methylation of 2'-deoxyuridine-5'-monophosphate (dUMP) to 2'-deoxythymidine-5'-monophosphate (dTMP) while utilizing 5,10-methylenetetrahydrofolate (mTHF) as the methyl donor and reductant in the reaction, yielding dihydrofolate (DHF) as a by-product. This enzymatic reaction provides an intracellular de novo source of dTMP, an essential precursor for DNA biosynthesis. The chain is Thymidylate synthase from Mesorhizobium japonicum (strain LMG 29417 / CECT 9101 / MAFF 303099) (Mesorhizobium loti (strain MAFF 303099)).